Reading from the N-terminus, the 345-residue chain is N-acetyl-gamma-glutamyl-phosphate reductase (345 aa).

Cysteine 149 is a catalytic residue.

This sequence belongs to the NAGSA dehydrogenase family. Type 1 subfamily.

It is found in the cytoplasm. It carries out the reaction N-acetyl-L-glutamate 5-semialdehyde + phosphate + NADP(+) = N-acetyl-L-glutamyl 5-phosphate + NADPH + H(+). It functions in the pathway amino-acid biosynthesis; L-arginine biosynthesis; N(2)-acetyl-L-ornithine from L-glutamate: step 3/4. In terms of biological role, catalyzes the NADPH-dependent reduction of N-acetyl-5-glutamyl phosphate to yield N-acetyl-L-glutamate 5-semialdehyde. The polypeptide is N-acetyl-gamma-glutamyl-phosphate reductase (Bacillus mycoides (strain KBAB4) (Bacillus weihenstephanensis)).